We begin with the raw amino-acid sequence, 160 residues long: 3-dehydroquinate dehydratase (160 aa).

The Proton acceptor role is filled by Tyr-22. Positions 73, 79, and 86 each coordinate substrate. The active-site Proton donor is the His-99. Substrate-binding positions include 100–101 (IS) and Arg-110.

It belongs to the type-II 3-dehydroquinase family. In terms of assembly, homododecamer.

It catalyses the reaction 3-dehydroquinate = 3-dehydroshikimate + H2O. It participates in metabolic intermediate biosynthesis; chorismate biosynthesis; chorismate from D-erythrose 4-phosphate and phosphoenolpyruvate: step 3/7. Its function is as follows. Catalyzes a trans-dehydration via an enolate intermediate. The polypeptide is 3-dehydroquinate dehydratase (Campylobacter lari (strain RM2100 / D67 / ATCC BAA-1060)).